A 227-amino-acid polypeptide reads, in one-letter code: Glial cell line-derived neurotrophic factor (227 aa).

The signal sequence occupies residues 1 to 19 (MKLWAILAVCILLLSSVSS). The propeptide occupies 20–93 (IPLPSNWLAG…EFIQDTIKRL (74 aa)). Disordered regions lie at residues 32-61 (RSHL…ANMA) and 93-113 (LKRS…QSLA). 3 disulfides stabilise this stretch: C134–C195, C161–C224, and C165–C226. N-linked (GlcNAc...) asparagine glycans are attached at residues N142 and N178.

The protein belongs to the TGF-beta family. GDNF subfamily. Homodimer; disulfide-linked. Interacts with GFRA1 coreceptor and RET: forms a 2:2:2 ternary complex composed of GDNF ligand, GFRA1 and RET receptor. From stage 22, expressed in somites and the pronephros. At stage 24 and 26, expressed in the pharyngeal arches I-III. At stage 31, expression in the eye, central nervous system and pharyngeal arches IV and V increases. Up to stage 34, expression becomes intense at the oral cavity and lateral line structures. At this stage, expression weakens in the pharyngeal arches, and increases in the epibranchial arches. Expressed in the digestive tract in stage 34 embryos.

The protein resides in the secreted. Functionally, neurotrophic factor that enhances survival and morphological differentiation of dopaminergic neurons and increases their high-affinity dopamine uptake. Acts by binding to its coreceptor, GFRA1, leading to autophosphorylation and activation of the RET receptor. The chain is Glial cell line-derived neurotrophic factor from Xenopus laevis (African clawed frog).